The primary structure comprises 1351 residues: ABC transporter C family member 6 (1351 aa).

Positions Asn-112–Gly-397 constitute an ABC transmembrane type-1 1 domain. 3 helical membrane passes run Leu-120–Ile-140, Ser-149–Ile-169, and Leu-248–Leu-268. Residues Asn-474–Thr-700 enclose the ABC transporter 1 domain. Gly-510–Thr-517 contacts ATP. A coiled-coil region spans residues Lys-701–Ile-734. Helical transmembrane passes span Gly-771–Phe-791, Ile-815–Leu-835, Leu-904–Ala-924, Met-977–Ser-999, Leu-1002–Ser-1022, and Gly-1025–Ile-1045. The 284-residue stretch at Leu-777–Arg-1060 folds into the ABC transmembrane type-1 2 domain. One can recognise an ABC transporter 2 domain in the interval Ile-1101–Lys-1336. Gly-1135–Thr-1142 provides a ligand contact to ATP.

The protein belongs to the ABC transporter superfamily. ABCC family. Conjugate transporter (TC 3.A.1.208) subfamily.

The protein resides in the membrane. This Dictyostelium discoideum (Social amoeba) protein is ABC transporter C family member 6 (abcC6).